The following is a 137-amino-acid chain: Large ribosomal subunit protein uL16 (137 aa).

It belongs to the universal ribosomal protein uL16 family. Part of the 50S ribosomal subunit.

In terms of biological role, binds 23S rRNA and is also seen to make contacts with the A and possibly P site tRNAs. The protein is Large ribosomal subunit protein uL16 of Bartonella henselae (strain ATCC 49882 / DSM 28221 / CCUG 30454 / Houston 1) (Rochalimaea henselae).